Consider the following 573-residue polypeptide: 60 kDa heat shock protein, mitochondrial (573 aa).

Residues 1–26 constitute a mitochondrion transit peptide; it reads MLRLPTVFRQMRPVSRVLAPHLTRAY. Residue lysine 31 is modified to N6-succinyllysine. A phosphoserine mark is found at serine 67 and serine 70. Lysine 75 lines the ATP pocket. Position 75 is an N6-acetyllysine (lysine 75). At lysine 82 the chain carries N6-acetyllysine; alternate. N6-succinyllysine; alternate is present on lysine 82. At lysine 87 the chain carries N6-acetyllysine. Position 90 is a phosphotyrosine (tyrosine 90). An N6-acetyllysine modification is found at lysine 91. 111-115 contributes to the ATP binding site; that stretch reads DGTTT. An N6-acetyllysine; alternate modification is found at lysine 125. Lysine 125 bears the N6-succinyllysine; alternate mark. Lysine 130 is subject to N6-acetyllysine. Position 133 is an N6-acetyllysine; alternate (lysine 133). Lysine 133 carries the N6-succinyllysine; alternate modification. Position 133 is an N6-malonyllysine; alternate (lysine 133). Position 156 is an N6-acetyllysine (lysine 156). Residues lysine 191, lysine 202, lysine 205, lysine 218, and lysine 236 each carry the N6-acetyllysine; alternate modification. An N6-succinyllysine; alternate mark is found at lysine 191, lysine 202, lysine 205, lysine 218, and lysine 236. Lysine 249 bears the N6-acetyllysine mark. An N6-acetyllysine; alternate modification is found at lysine 250. Lysine 250 bears the N6-succinyllysine; alternate mark. N6-acetyllysine occurs at positions 269 and 292. Lysine 301 is modified (N6-succinyllysine). N6-acetyllysine is present on lysine 314. Residue lysine 352 is modified to N6-acetyllysine; alternate. Lysine 352 carries the N6-succinyllysine; alternate modification. Lysine 389 is modified (N6-acetyllysine). Position 396 is an N6-acetyllysine; alternate (lysine 396). At lysine 396 the chain carries N6-succinyllysine; alternate. Serine 410 is subject to Phosphoserine. Glycine 440 serves as a coordination point for ATP. Lysine 469 carries the N6-acetyllysine modification. Lysine 481 bears the N6-acetyllysine; alternate mark. At lysine 481 the chain carries N6-succinyllysine; alternate. A Phosphoserine modification is found at serine 488. Residue aspartate 520 coordinates ATP. Lysine 551 is covalently cross-linked (Glycyl lysine isopeptide (Lys-Gly) (interchain with G-Cter in SUMO2)).

Belongs to the chaperonin (HSP60) family. In terms of assembly, homoheptamer arranged in a ring structure. The functional units of these chaperonins consist of heptameric rings of the large subunit Hsp60, which function as a back-to-back double ring. Interacts with 2 heptameric Hsp10 rings to form the symmetrical football complex. Interacts with HRAS. Interacts with ATAD3A. Interacts with ETFBKMT and EEF1AKMT3. Interacts with MFHAS1.

It is found in the mitochondrion matrix. The catalysed reaction is ATP + H2O + a folded polypeptide = ADP + phosphate + an unfolded polypeptide.. Its function is as follows. Chaperonin implicated in mitochondrial protein import and macromolecular assembly. Together with Hsp10, facilitates the correct folding of imported proteins. May also prevent misfolding and promote the refolding and proper assembly of unfolded polypeptides generated under stress conditions in the mitochondrial matrix. The functional units of these chaperonins consist of heptameric rings of the large subunit Hsp60, which function as a back-to-back double ring. In a cyclic reaction, Hsp60 ring complexes bind one unfolded substrate protein per ring, followed by the binding of ATP and association with 2 heptameric rings of the co-chaperonin Hsp10. This leads to sequestration of the substrate protein in the inner cavity of Hsp60 where, for a certain period of time, it can fold undisturbed by other cell components. Synchronous hydrolysis of ATP in all Hsp60 subunits results in the dissociation of the chaperonin rings and the release of ADP and the folded substrate protein. The protein is 60 kDa heat shock protein, mitochondrial (HSPD1) of Pongo abelii (Sumatran orangutan).